The sequence spans 198 residues: Ribonuclease HII (198 aa).

In terms of domain architecture, RNase H type-2 spans 6 to 198; sequence EQIAGVDEVG…APCQASLLPD (193 aa). A divalent metal cation-binding residues include Asp-12, Glu-13, and Asp-108.

This sequence belongs to the RNase HII family. The cofactor is Mn(2+). Mg(2+) serves as cofactor.

The protein resides in the cytoplasm. The catalysed reaction is Endonucleolytic cleavage to 5'-phosphomonoester.. Its function is as follows. Endonuclease that specifically degrades the RNA of RNA-DNA hybrids. The protein is Ribonuclease HII of Acaryochloris marina (strain MBIC 11017).